We begin with the raw amino-acid sequence, 251 residues long: Hydroxyacylglutathione hydrolase (251 aa).

7 residues coordinate Zn(2+): His-53, His-55, Asp-57, His-58, His-110, Asp-127, and His-165.

The protein belongs to the metallo-beta-lactamase superfamily. Glyoxalase II family. As to quaternary structure, monomer. Zn(2+) is required as a cofactor.

It catalyses the reaction an S-(2-hydroxyacyl)glutathione + H2O = a 2-hydroxy carboxylate + glutathione + H(+). It participates in secondary metabolite metabolism; methylglyoxal degradation; (R)-lactate from methylglyoxal: step 2/2. Its function is as follows. Thiolesterase that catalyzes the hydrolysis of S-D-lactoyl-glutathione to form glutathione and D-lactic acid. The polypeptide is Hydroxyacylglutathione hydrolase (Shigella boydii serotype 18 (strain CDC 3083-94 / BS512)).